The chain runs to 377 residues: N-acetyldiaminopimelate deacetylase (377 aa).

D69 is a catalytic residue. The active-site Proton acceptor is E128.

The protein belongs to the peptidase M20A family. N-acetyldiaminopimelate deacetylase subfamily.

It carries out the reaction N-acetyl-(2S,6S)-2,6-diaminopimelate + H2O = (2S,6S)-2,6-diaminopimelate + acetate. It functions in the pathway amino-acid biosynthesis; L-lysine biosynthesis via DAP pathway; LL-2,6-diaminopimelate from (S)-tetrahydrodipicolinate (acetylase route): step 3/3. Functionally, catalyzes the conversion of N-acetyl-diaminopimelate to diaminopimelate and acetate. This is N-acetyldiaminopimelate deacetylase from Streptococcus gordonii (strain Challis / ATCC 35105 / BCRC 15272 / CH1 / DL1 / V288).